A 344-amino-acid chain; its full sequence is MIEQDRIIDANAKSREEQIDRAVRPKSLKEYIGQPVVREQMEIFIGAAQARGDSLDHTLVFGPPGLGKTTLANIIAAEMGADLKSTSGPVLEKAGDLAALMTNLEPGDVLFIDEIHRLSPVVEEILYPAMEDFQLDIMIGEGPAARSIKLELPPFTLVGATTRAGLLTSPLRDRFGIVQRLEFYNIEDLTHIVERSASLMGVAMDTPGAREVAKRSRGTPRIANRLLRRVRDYAEVKSDGTVTAQIADLALNMLNVDEHGFDHMDRRLLLTLIEKFGGGPVGVDSLAAAISEERDTIEDVLEPYLIQQGFIMRTPRGRMATQLAYQHFGLNVPAALKQDSLPGI.

The large ATPase domain (RuvB-L) stretch occupies residues 4-184 (QDRIIDANAK…FGIVQRLEFY (181 aa)). Residues Arg-24, Gly-65, Lys-68, Thr-69, Thr-70, 131 to 133 (EDF), Arg-174, Tyr-184, and Arg-221 each bind ATP. Position 69 (Thr-69) interacts with Mg(2+). The small ATPAse domain (RuvB-S) stretch occupies residues 185 to 255 (NIEDLTHIVE…IADLALNMLN (71 aa)). The interval 258–344 (EHGFDHMDRR…ALKQDSLPGI (87 aa)) is head domain (RuvB-H). 3 residues coordinate DNA: Arg-294, Arg-313, and Arg-318.

This sequence belongs to the RuvB family. Homohexamer. Forms an RuvA(8)-RuvB(12)-Holliday junction (HJ) complex. HJ DNA is sandwiched between 2 RuvA tetramers; dsDNA enters through RuvA and exits via RuvB. An RuvB hexamer assembles on each DNA strand where it exits the tetramer. Each RuvB hexamer is contacted by two RuvA subunits (via domain III) on 2 adjacent RuvB subunits; this complex drives branch migration. In the full resolvosome a probable DNA-RuvA(4)-RuvB(12)-RuvC(2) complex forms which resolves the HJ.

It localises to the cytoplasm. The enzyme catalyses ATP + H2O = ADP + phosphate + H(+). Its function is as follows. The RuvA-RuvB-RuvC complex processes Holliday junction (HJ) DNA during genetic recombination and DNA repair, while the RuvA-RuvB complex plays an important role in the rescue of blocked DNA replication forks via replication fork reversal (RFR). RuvA specifically binds to HJ cruciform DNA, conferring on it an open structure. The RuvB hexamer acts as an ATP-dependent pump, pulling dsDNA into and through the RuvAB complex. RuvB forms 2 homohexamers on either side of HJ DNA bound by 1 or 2 RuvA tetramers; 4 subunits per hexamer contact DNA at a time. Coordinated motions by a converter formed by DNA-disengaged RuvB subunits stimulates ATP hydrolysis and nucleotide exchange. Immobilization of the converter enables RuvB to convert the ATP-contained energy into a lever motion, pulling 2 nucleotides of DNA out of the RuvA tetramer per ATP hydrolyzed, thus driving DNA branch migration. The RuvB motors rotate together with the DNA substrate, which together with the progressing nucleotide cycle form the mechanistic basis for DNA recombination by continuous HJ branch migration. Branch migration allows RuvC to scan DNA until it finds its consensus sequence, where it cleaves and resolves cruciform DNA. The polypeptide is Holliday junction branch migration complex subunit RuvB (Saccharophagus degradans (strain 2-40 / ATCC 43961 / DSM 17024)).